A 120-amino-acid chain; its full sequence is NAD(P)H-quinone oxidoreductase subunit 3, chloroplastic (120 aa).

Transmembrane regions (helical) follow at residues 9–29 (IFWTFLIISSVIPILAFLISG), 64–84 (MFALVFVVFDVETVFLYPWAM), and 88–108 (VLGVSVFIEAFIFVLIPIVGS).

It belongs to the complex I subunit 3 family. In terms of assembly, NDH is composed of at least 16 different subunits, 5 of which are encoded in the nucleus.

The protein resides in the plastid. The protein localises to the chloroplast thylakoid membrane. It catalyses the reaction a plastoquinone + NADH + (n+1) H(+)(in) = a plastoquinol + NAD(+) + n H(+)(out). It carries out the reaction a plastoquinone + NADPH + (n+1) H(+)(in) = a plastoquinol + NADP(+) + n H(+)(out). NDH shuttles electrons from NAD(P)H:plastoquinone, via FMN and iron-sulfur (Fe-S) centers, to quinones in the photosynthetic chain and possibly in a chloroplast respiratory chain. The immediate electron acceptor for the enzyme in this species is believed to be plastoquinone. Couples the redox reaction to proton translocation, and thus conserves the redox energy in a proton gradient. In Piper cenocladum (Ant piper), this protein is NAD(P)H-quinone oxidoreductase subunit 3, chloroplastic.